The chain runs to 143 residues: Regulator of ribonuclease activity B (143 aa).

Residues 113–143 (EDPNAEEDEYGDDGEFFDDEDEADFNNAKVH) are disordered. The span at 115 to 136 (PNAEEDEYGDDGEFFDDEDEAD) shows a compositional bias: acidic residues.

The protein belongs to the RraB family. As to quaternary structure, interacts with the C-terminal region of Rne.

It localises to the cytoplasm. Globally modulates RNA abundance by binding to RNase E (Rne) and regulating its endonucleolytic activity. Can modulate Rne action in a substrate-dependent manner by altering the composition of the degradosome. The polypeptide is Regulator of ribonuclease activity B (Haemophilus ducreyi (strain 35000HP / ATCC 700724)).